The primary structure comprises 355 residues: Glucose-1-phosphate thymidylyltransferase (355 aa).

Mg(2+) is bound by residues D107 and D220.

It belongs to the glucose-1-phosphate thymidylyltransferase family. Mg(2+) is required as a cofactor.

It carries out the reaction dTTP + alpha-D-glucose 1-phosphate + H(+) = dTDP-alpha-D-glucose + diphosphate. The protein operates within antibiotic biosynthesis; streptomycin biosynthesis. In terms of biological role, involved in the biosynthesis of the streptose moiety of streptomycin. Catalyzes the formation of dTDP-glucose, from dTTP and glucose 1-phosphate, as well as its pyrophosphorolysis. The sequence is that of Glucose-1-phosphate thymidylyltransferase (strD) from Streptomyces griseus.